The chain runs to 444 residues: Serine--tRNA ligase (444 aa).

An L-serine-binding site is contributed by 248 to 250 (TSE). Residue 279-281 (RSE) coordinates ATP. E302 is an L-serine binding site. 366-369 (EISS) contacts ATP. Residue S401 coordinates L-serine.

The protein belongs to the class-II aminoacyl-tRNA synthetase family. Type-1 seryl-tRNA synthetase subfamily. Homodimer. The tRNA molecule binds across the dimer.

It is found in the cytoplasm. The catalysed reaction is tRNA(Ser) + L-serine + ATP = L-seryl-tRNA(Ser) + AMP + diphosphate + H(+). It catalyses the reaction tRNA(Sec) + L-serine + ATP = L-seryl-tRNA(Sec) + AMP + diphosphate + H(+). Its pathway is aminoacyl-tRNA biosynthesis; selenocysteinyl-tRNA(Sec) biosynthesis; L-seryl-tRNA(Sec) from L-serine and tRNA(Sec): step 1/1. Catalyzes the attachment of serine to tRNA(Ser). Is also able to aminoacylate tRNA(Sec) with serine, to form the misacylated tRNA L-seryl-tRNA(Sec), which will be further converted into selenocysteinyl-tRNA(Sec). This is Serine--tRNA ligase from Polaromonas naphthalenivorans (strain CJ2).